A 181-amino-acid polypeptide reads, in one-letter code: ATP-dependent protease subunit HslV (181 aa).

The active site involves T9. 3 residues coordinate Na(+): S166, C169, and T172.

It belongs to the peptidase T1B family. HslV subfamily. As to quaternary structure, a double ring-shaped homohexamer of HslV is capped on each side by a ring-shaped HslU homohexamer. The assembly of the HslU/HslV complex is dependent on binding of ATP.

The protein resides in the cytoplasm. It catalyses the reaction ATP-dependent cleavage of peptide bonds with broad specificity.. Its activity is regulated as follows. Allosterically activated by HslU binding. Protease subunit of a proteasome-like degradation complex believed to be a general protein degrading machinery. The sequence is that of ATP-dependent protease subunit HslV from Staphylococcus haemolyticus (strain JCSC1435).